A 219-amino-acid chain; its full sequence is Ribose-5-phosphate isomerase A (219 aa).

Substrate is bound by residues 28–31 (TGST), 81–84 (DGAD), and 94–97 (KGGG). Glu-103 acts as the Proton acceptor in catalysis. Residue Lys-121 participates in substrate binding.

This sequence belongs to the ribose 5-phosphate isomerase family. As to quaternary structure, homodimer.

The enzyme catalyses aldehydo-D-ribose 5-phosphate = D-ribulose 5-phosphate. It participates in carbohydrate degradation; pentose phosphate pathway; D-ribose 5-phosphate from D-ribulose 5-phosphate (non-oxidative stage): step 1/1. In terms of biological role, catalyzes the reversible conversion of ribose-5-phosphate to ribulose 5-phosphate. The protein is Ribose-5-phosphate isomerase A of Acidithiobacillus ferrooxidans (strain ATCC 23270 / DSM 14882 / CIP 104768 / NCIMB 8455) (Ferrobacillus ferrooxidans (strain ATCC 23270)).